A 448-amino-acid chain; its full sequence is UDP-N-acetylmuramoylalanine--D-glutamate ligase (448 aa).

116–122 (GSNAKST) serves as a coordination point for ATP.

The protein belongs to the MurCDEF family.

The protein localises to the cytoplasm. It catalyses the reaction UDP-N-acetyl-alpha-D-muramoyl-L-alanine + D-glutamate + ATP = UDP-N-acetyl-alpha-D-muramoyl-L-alanyl-D-glutamate + ADP + phosphate + H(+). Its pathway is cell wall biogenesis; peptidoglycan biosynthesis. Cell wall formation. Catalyzes the addition of glutamate to the nucleotide precursor UDP-N-acetylmuramoyl-L-alanine (UMA). The polypeptide is UDP-N-acetylmuramoylalanine--D-glutamate ligase (Pseudomonas fluorescens (strain Pf0-1)).